The chain runs to 198 residues: Angiopoietin-like protein 8 (198 aa).

Positions 1–21 are cleaved as a signal peptide; the sequence is MPVPALCLLWALAMVTRPASA.

This sequence belongs to the ANGPTL8 family. Interacts with ANGPTL3. Proteolytically cleaved at the N-terminus. Predominantly expressed in liver. Also expressed in adipose tissues.

Its subcellular location is the secreted. Hormone that acts as a blood lipid regulator by regulating serum triglyceride levels. May be involved in the metabolic transition between fasting and refeeding: required to direct fatty acids to adipose tissue for storage in the fed state. In Homo sapiens (Human), this protein is Angiopoietin-like protein 8.